A 252-amino-acid polypeptide reads, in one-letter code: MPRKILGVIPARFSSTRFPGKVLAQIANKTMLQHVYERAGLATYLTSTIIATDDERVYTAAKSFGARVRMTRADHLSGTDRVAEVASAENAEIIVNIQGDEPLIDPAAIDAAVLPLVHEPDVLMGTLKKRIEDPREIVDPNVVKVVTDHAGDAIYFSRCPIPFDRDRSADTPYFKHVGLYVYQRDFLLSYSTLPVGPLERSERLEQLRALENGYRIRVVETEYESLGVDTPEDLERVSRLFKASILQGMGNG.

Belongs to the KdsB family.

Its subcellular location is the cytoplasm. It carries out the reaction 3-deoxy-alpha-D-manno-oct-2-ulosonate + CTP = CMP-3-deoxy-beta-D-manno-octulosonate + diphosphate. Its pathway is nucleotide-sugar biosynthesis; CMP-3-deoxy-D-manno-octulosonate biosynthesis; CMP-3-deoxy-D-manno-octulosonate from 3-deoxy-D-manno-octulosonate and CTP: step 1/1. The protein operates within bacterial outer membrane biogenesis; lipopolysaccharide biosynthesis. Functionally, activates KDO (a required 8-carbon sugar) for incorporation into bacterial lipopolysaccharide in Gram-negative bacteria. The polypeptide is 3-deoxy-manno-octulosonate cytidylyltransferase (Solibacter usitatus (strain Ellin6076)).